A 203-amino-acid polypeptide reads, in one-letter code: Endo-type membrane-bound lytic murein transglycosylase A (203 aa).

A signal peptide spans 1–15 (MKLRWFAFLMVLLAG). A lipid anchor (N-palmitoyl cysteine) is attached at Cys-16. Cys-16 carries S-diacylglycerol cysteine lipidation.

It belongs to the transglycosylase Slt family.

Its subcellular location is the cell outer membrane. The enzyme catalyses Endolytic cleavage of the (1-&gt;4)-beta-glycosidic linkage between N-acetylmuramic acid (MurNAc) and N-acetylglucosamine (GlcNAc) residues in peptidoglycan with concomitant formation of a 1,6-anhydrobond in the MurNAc residue.. Murein-degrading enzyme. May play a role in recycling of muropeptides during cell elongation and/or cell division. Preferentially cleaves at a distance of more than two disaccharide units from the ends of the glycan chain. This is Endo-type membrane-bound lytic murein transglycosylase A from Enterobacter sp. (strain 638).